Reading from the N-terminus, the 230-residue chain is MVRGKTQMKRIENPTSRQVTFSKRRNGLLKKAFELSVLCDAEVALIVFSPRGKLYEFASASTQKTIERYRTYTKENIGNKTVQQDIEQVKADADGLAKKLEALETYKRKLLGEKLDECSIEELHSLEVKLERSLISIRGRKTKLLEEQVAKLREKEMKLRKDNEELREKCKNQPPLSAPLTVRAEDENPDRNINTTNDNMDVETELFIGLPGRSRSSGGAAEDSQAMPHS.

Residues 1–61 enclose the MADS-box domain; sequence MVRGKTQMKR…GKLYEFASAS (61 aa). One can recognise a K-box domain in the interval 86–176; sequence IEQVKADADG…REKCKNQPPL (91 aa). The disordered stretch occupies residues 209 to 230; that stretch reads GLPGRSRSSGGAAEDSQAMPHS.

In terms of tissue distribution, expressed in mature leaves and at low levels in roots and young panicles.

It localises to the nucleus. Its function is as follows. Probable transcription factor active in flowering time control. May control internode elongation and promote floral transition phase. May act upstream of the floral regulators MADS1, MADS14, MADS15 and MADS18 in the floral induction pathway. This chain is MADS-box transcription factor 50 (MADS50), found in Oryza sativa subsp. japonica (Rice).